Consider the following 126-residue polypeptide: Large ribosomal subunit protein uL22 (126 aa).

It belongs to the universal ribosomal protein uL22 family. Part of the 50S ribosomal subunit.

In terms of biological role, this protein binds specifically to 23S rRNA; its binding is stimulated by other ribosomal proteins, e.g. L4, L17, and L20. It is important during the early stages of 50S assembly. It makes multiple contacts with different domains of the 23S rRNA in the assembled 50S subunit and ribosome. Functionally, the globular domain of the protein is located near the polypeptide exit tunnel on the outside of the subunit, while an extended beta-hairpin is found that lines the wall of the exit tunnel in the center of the 70S ribosome. In Zymomonas mobilis subsp. mobilis (strain ATCC 31821 / ZM4 / CP4), this protein is Large ribosomal subunit protein uL22.